Consider the following 512-residue polypeptide: Cytochrome P450 72A11 (512 aa).

The helical transmembrane segment at 2 to 22 threads the bilayer; that stretch reads EISVASVTVSVAVVVVSWWVW. C460 contributes to the heme binding site.

The protein belongs to the cytochrome P450 family. It depends on heme as a cofactor.

Its subcellular location is the membrane. In Arabidopsis thaliana (Mouse-ear cress), this protein is Cytochrome P450 72A11 (CYP72A11).